A 135-amino-acid chain; its full sequence is Large ribosomal subunit protein uL16c (135 aa).

Met1 carries the post-translational modification N-methylmethionine.

As to quaternary structure, component of the chloroplast large ribosomal subunit (LSU). Mature 70S chloroplast ribosomes of higher plants consist of a small (30S) and a large (50S) subunit. The 30S small subunit contains 1 molecule of ribosomal RNA (16S rRNA) and 24 different proteins. The 50S large subunit contains 3 rRNA molecules (23S, 5S and 4.5S rRNA) and 33 different proteins. Post-translationally, partially alpha-N-monomethylated at Met-1 (10%), whereas 90% of it is blocked to Edman degradation, probably by trimethylation.

The protein localises to the plastid. The protein resides in the chloroplast. In terms of biological role, component of the chloroplast ribosome (chloro-ribosome), a dedicated translation machinery responsible for the synthesis of chloroplast genome-encoded proteins, including proteins of the transcription and translation machinery and components of the photosynthetic apparatus. In Spinacia oleracea (Spinach), this protein is Large ribosomal subunit protein uL16c.